The sequence spans 432 residues: N-acylneuraminate cytidylyltransferase (432 aa).

Substrate is bound by residues arginine 39, asparagine 49, arginine 98, serine 107, serine 109, and glutamine 130. Arginine 188 is an active-site residue.

The protein belongs to the CMP-NeuNAc synthase family. As to quaternary structure, homotetramer; the active enzyme is formed by a dimer of dimers. Expressed in testis, ovary and liver.

The protein localises to the nucleus. The enzyme catalyses an N-acylneuraminate + CTP = a CMP-N-acyl-beta-neuraminate + diphosphate. The protein operates within amino-sugar metabolism; N-acetylneuraminate metabolism. Functionally, catalyzes the activation of N-acetylneuraminic acid (NeuNAc) to cytidine 5'-monophosphate N-acetylneuraminic acid (CMP-NeuNAc), a substrate required for the addition of sialic acid. This Oncorhynchus mykiss (Rainbow trout) protein is N-acylneuraminate cytidylyltransferase (cmas).